The following is a 2742-amino-acid chain: Polycystin-1-like protein 1 (2742 aa).

The Extracellular segment spans residues 1 to 1602 (MFCLWIFSLA…LDQFLSVSRD (1602 aa)). Residues asparagine 35, asparagine 133, asparagine 149, asparagine 220, and asparagine 267 are each glycosylated (N-linked (GlcNAc...) asparagine). PKD domains follow at residues 286 to 372 (AVRI…VKLN) and 370 to 454 (KLNR…PCQP). 7 N-linked (GlcNAc...) asparagine glycosylation sites follow: asparagine 383, asparagine 397, asparagine 486, asparagine 545, asparagine 693, asparagine 709, and asparagine 735. The REJ domain maps to 452 to 1338 (CQPPPVKNLG…ITFFLPASLI (887 aa)). Disordered stretches follow at residues 767-829 (SPSR…QSDP) and 846-908 (DLRG…RPSV). The segment covering 779–799 (SELTDSPVSSVTVGFSGSESF) has biased composition (polar residues). Residues 880–893 (SFPSDSDSFSHSSS) are compositionally biased toward low complexity. Asparagine 1080, asparagine 1101, asparagine 1201, asparagine 1318, asparagine 1437, asparagine 1490, and asparagine 1568 each carry an N-linked (GlcNAc...) asparagine glycan. Residues 1436 to 1587 (HNFSITQEHL…KVLQQQIQSS (152 aa)) enclose the GAIN-B domain. Intrachain disulfides connect cysteine 1541–cysteine 1569 and cysteine 1556–cysteine 1571. The tract at residues 1541–1587 (CLSWEDQQGSWTQNGCRAQTNDKTSAVNCSCHHLKPLKVLQQQIQSS) is GPS. Residues 1603–1623 (LTVVFVLLLCVSLNIPVLVWC) traverse the membrane as a helical segment. Over 1624–1812 (KKTDATSEEN…SPHLFTRAQR (189 aa)) the chain is Cytoplasmic. In terms of domain architecture, PLAT spans 1648-1769 (HFYAVTVHTG…GDGQVERMLR (122 aa)). Residues 1813-1833 (LCVCLLLFLGYACVNIIITHQ) form a helical membrane-spanning segment. Over 1834–1851 (RDDQLPFDLGVIDVTSVS) the chain is Extracellular. A helical membrane pass occupies residues 1852 to 1872 (IATGLVSVVAVLPVAMVISFL). The Cytoplasmic portion of the chain corresponds to 1873-2005 (FRVKSGRMTL…YRLASLLYHC (133 aa)). Residues 2006–2026 (VAWTLCLLFCLSCLILSAVLG) traverse the membrane as a helical segment. Residues 2027-2040 (TRLNSGKILHWIHS) are Extracellular-facing. Residues 2041 to 2061 (LFVSLTFCFFVIHPATILVLA) traverse the membrane as a helical segment. The Cytoplasmic portion of the chain corresponds to 2062-2151 (AVVSWRFKRS…KQAVIHKMLR (90 aa)). The helical transmembrane segment at 2152–2172 (DLCLCGSMFFLMVCITYGSPV) threads the bilayer. Residues 2173–2344 (DEHYPLNAAF…QSVRLYHSPS (172 aa)) lie on the Extracellular side of the membrane. An N-linked (GlcNAc...) asparagine glycan is attached at asparagine 2218. The helical transmembrane segment at 2345–2365 (MLDYTVMVWQLLFLLLSLVNL) threads the bilayer. Topologically, residues 2366–2378 (YHQTSTAAQHGLM) are cytoplasmic. The chain crosses the membrane as a helical span at residues 2379-2401 (GYWKTTSISVEVSLVIVSLVYYV). The Extracellular segment spans residues 2402–2442 (HYVYHPTMVMEVAEQLRRNHREHVDVSTLANSEQFSRTLRG). Residues 2443-2463 (IILFLLAVKCVTVVRLNRILA) traverse the membrane as a helical segment. Residues 2464 to 2467 (PSMP) lie on the Cytoplasmic side of the membrane. The helical transmembrane segment at 2468 to 2488 (LLSLSSLLWPAISGLLLLSIF) threads the bilayer. Residues 2489–2528 (SCMGRLLYIERTFHSIQTVLWHFWSLRKSRDLISLWRDFY) are Extracellular-facing. The chain crosses the membrane as a helical span at residues 2529 to 2549 (YFGLLYASSAMLTTMVFAVMI). The Cytoplasmic portion of the chain corresponds to 2550–2742 (RKAKRSPSTK…LVHHEQGTKN (193 aa)).

This sequence belongs to the polycystin family. In terms of assembly, heterodimer. Interacts with pkd2 to form a calcium channel. Interacts with pkd2l1 to form ciliary calcium channel. In terms of tissue distribution, expressed in Kupffer's vesicle, an organ equivalent to the node.

Its subcellular location is the cell projection. The protein localises to the cilium membrane. Component of a calcium-permeant ion channel formed by PKD1L2 and PKD1L1 in primary cilia, where it controls cilium calcium concentration, without affecting cytoplasmic calcium concentration, and regulates sonic hedgehog/SHH signaling and GLI2 transcription. The PKD1L1:PKD2L1 channel complex is mechanosensitive only at high pressures and is highly temperature sensitive. Also involved in left/right axis specification downstream of nodal flow by forming a complex with PKD2 in cilia to facilitate flow detection in left/right patterning. In Oryzias latipes (Japanese rice fish), this protein is Polycystin-1-like protein 1.